Reading from the N-terminus, the 189-residue chain is Ras-like protein rasC (189 aa).

11 to 18 (GDGGVGKS) contacts GTP. Residues 33–41 (YDPTIENSY) carry the Effector region motif. GTP contacts are provided by residues 58–62 (DTAGQ) and 117–120 (NKAD). At C186 the chain carries Cysteine methyl ester. The S-geranylgeranyl cysteine moiety is linked to residue C186. The propeptide at 187 to 189 (IIL) is removed in mature form.

It belongs to the small GTPase superfamily. Ras family.

It localises to the cell membrane. The catalysed reaction is GTP + H2O = GDP + phosphate + H(+). Its activity is regulated as follows. Alternates between an inactive form bound to GDP and an active form bound to GTP. Activated by a guanine nucleotide-exchange factor (GEF) and inactivated by a GTPase-activating protein (GAP). Functionally, ras proteins bind GDP/GTP and possess intrinsic GTPase activity. This Dictyostelium discoideum (Social amoeba) protein is Ras-like protein rasC (rasC).